The chain runs to 206 residues: dTTP/UTP pyrophosphatase (206 aa).

D79 functions as the Proton acceptor in the catalytic mechanism.

The protein belongs to the Maf family. YhdE subfamily. The cofactor is a divalent metal cation.

It is found in the cytoplasm. It carries out the reaction dTTP + H2O = dTMP + diphosphate + H(+). The catalysed reaction is UTP + H2O = UMP + diphosphate + H(+). Functionally, nucleoside triphosphate pyrophosphatase that hydrolyzes dTTP and UTP. May have a dual role in cell division arrest and in preventing the incorporation of modified nucleotides into cellular nucleic acids. The protein is dTTP/UTP pyrophosphatase of Rhizobium johnstonii (strain DSM 114642 / LMG 32736 / 3841) (Rhizobium leguminosarum bv. viciae).